A 1171-amino-acid chain; its full sequence is MIHPREVLEGPILAVSRQTKSVVDIPGAPKRYSFAKVSAPIEVPGLLDLQLDSFAWLIGTPEWRARQQEEFGEGARITSGLENILEELSPIQDYSGNMSLSLSEPRFEPVKNTIDEAKEKDINYAAPLYVTAEFVNNTTGEIKSQTVFIGDFPMMTDKGTFIINGTERVVVSQLVRSPGVYFDQTIDKSTERPLHAVKVIPSRGAWLEFDVDKRDSVGVRIDRKRRQPVTVLLKALGWTTEQITERFGFSEIMMSTLESDGVANTDEALLEIYRKQRPGEQPTRDLAQSLLDNSFFKAKRYDLAKVGRYKINRKLGLGGDNDGLMTLTEEDIATAIEYLVRLHAGERVMTSPTGEEIPVETDDIDHFGNRRLRTVGELIQNQVRVGLSRMERVVRERMTTQDAESITPTSLINVRPVSAAIREFFGTSQLSQFMDQNNSLSGLTHKRRLSALGPGGLSRERAGIEVRDVHPSHYGRMCPIETPEGPNIGLIGSLASYARVNPFGFIETPYRRVIDGKLTDQIDYLTADEEDRFVVAQANTHYDEDGVITDESVTVRLKDGDIAMVSRTDVDYMDVSPRQMVSVGTAMIPFLEHDDANRALMGANMQKQAVPLVRAEAPFVGTGMELRAAYDAGDLVITPKAGVVENVTADIVTIMDDEGKRDTYVLRKFQRTNQGTSYNQKPLVNQGDRVEAGQVIADGPGTFNGEMSLGRNLLVAFMPWEGHNYEDAIILNQNIVEQDILTSIHIEEHEIDARDTKLGAEEITRDIPNVSEEVLKDLDERGIVRIGADVRDGDILVGKVTPKGETELTPEERLLRAIFGEKAREVRDTSMKVPHGETGKVIGVRRFSREDDDDLAPGVNEMIRVYVAQKRKIQDGDKLAGRHGNKGVVGKILPQEDMPFLPDGTPVDIILNTHGVPRRMNIGQVLETHLGWLAAAGWSVDPEDPKNAELIKTLPKELYDVPAGSLTATPVFDGASNEELAGLLANSRPNRDGDVMVNADGKATLIDGRSGEPYPYPVSIGYMYMLKLHHLVDEKIHARSTGPYSMITQQPLGGKAQFGGQRFGEMEVWAMQAYGAAYTLQELLTIKSDDVVGRVKVYEAIVKGENIPDPGIPESFKVLLKELQSLCLNVEVLSADGTPMELAGDDDDFDQAGASLGINLSRDERSDADTA.

The protein belongs to the RNA polymerase beta chain family. In terms of assembly, the RNAP catalytic core consists of 2 alpha, 1 beta, 1 beta' and 1 omega subunit. When a sigma factor is associated with the core the holoenzyme is formed, which can initiate transcription.

It catalyses the reaction RNA(n) + a ribonucleoside 5'-triphosphate = RNA(n+1) + diphosphate. Its function is as follows. DNA-dependent RNA polymerase catalyzes the transcription of DNA into RNA using the four ribonucleoside triphosphates as substrates. In Corynebacterium efficiens (strain DSM 44549 / YS-314 / AJ 12310 / JCM 11189 / NBRC 100395), this protein is DNA-directed RNA polymerase subunit beta.